The following is a 169-amino-acid chain: TPD1 protein homolog 1B (169 aa).

The first 25 residues, 1 to 25, serve as a signal peptide directing secretion; it reads MADCTTMRLASSVTIILLLLVASQA.

As to expression, expressed in roots, and at low levels in anthers during meiosis.

In terms of biological role, may play a role during anther development. The protein is TPD1 protein homolog 1B of Oryza sativa subsp. japonica (Rice).